Here is a 158-residue protein sequence, read N- to C-terminus: 6,7-dimethyl-8-ribityllumazine synthase (158 aa).

5-amino-6-(D-ribitylamino)uracil-binding positions include W27, S58–E60, and V81–I83. Residue G86–T87 coordinates (2S)-2-hydroxy-3-oxobutyl phosphate. H89 acts as the Proton donor in catalysis. 5-amino-6-(D-ribitylamino)uracil is bound at residue F114. (2S)-2-hydroxy-3-oxobutyl phosphate is bound at residue R128.

The protein belongs to the DMRL synthase family.

It carries out the reaction (2S)-2-hydroxy-3-oxobutyl phosphate + 5-amino-6-(D-ribitylamino)uracil = 6,7-dimethyl-8-(1-D-ribityl)lumazine + phosphate + 2 H2O + H(+). The protein operates within cofactor biosynthesis; riboflavin biosynthesis; riboflavin from 2-hydroxy-3-oxobutyl phosphate and 5-amino-6-(D-ribitylamino)uracil: step 1/2. Functionally, catalyzes the formation of 6,7-dimethyl-8-ribityllumazine by condensation of 5-amino-6-(D-ribitylamino)uracil with 3,4-dihydroxy-2-butanone 4-phosphate. This is the penultimate step in the biosynthesis of riboflavin. The polypeptide is 6,7-dimethyl-8-ribityllumazine synthase (Leifsonia xyli subsp. xyli (strain CTCB07)).